Here is a 479-residue protein sequence, read N- to C-terminus: MNFETIIGLEVHVELNTNSKIFSPSSAHFGEDPNANTNVIDWSFPGVLPVMNKGVIDAGIQAALALNMDIHKEMHFDRKNYFYPDNPKAYQISQFDEPIGYNGWIDIKLEDGSTKKIRIERAHLEEDAGKNTHGTDGYSYVDLNRQGVPLIEIVSEADMRSPEEAYAYLTALKEIIQYTGISDVKMEEGSMRVDANISLRPYGQEQFGTKTELKNLNSFSNVRKGLEFEVERQAKLLRSGGVIRQETRRYDEANKGTILMRVKEGAADYRYFPEPDLPLYEIDDAWIDEMRAQLPQFPAQRRAKYEEELGLSAYDASQLTATKALSDFFETAVSLGGDAKQVSNWLQGEVAQFLNAEGKTIEEIRLTPDNLVEMIAIIADGTISSKMAKKVFVHLAKNGGSARAYVEKAGLVQISDPAVLVPIIHQVFADNEAAVADFKSGKRNADKAFTGFLMKATKGQANPQVAQQLLAQELQKLRD.

Belongs to the GatB/GatE family. GatB subfamily. As to quaternary structure, heterotrimer of A, B and C subunits.

The enzyme catalyses L-glutamyl-tRNA(Gln) + L-glutamine + ATP + H2O = L-glutaminyl-tRNA(Gln) + L-glutamate + ADP + phosphate + H(+). It carries out the reaction L-aspartyl-tRNA(Asn) + L-glutamine + ATP + H2O = L-asparaginyl-tRNA(Asn) + L-glutamate + ADP + phosphate + 2 H(+). In terms of biological role, allows the formation of correctly charged Asn-tRNA(Asn) or Gln-tRNA(Gln) through the transamidation of misacylated Asp-tRNA(Asn) or Glu-tRNA(Gln) in organisms which lack either or both of asparaginyl-tRNA or glutaminyl-tRNA synthetases. The reaction takes place in the presence of glutamine and ATP through an activated phospho-Asp-tRNA(Asn) or phospho-Glu-tRNA(Gln). This Streptococcus pyogenes serotype M4 (strain MGAS10750) protein is Aspartyl/glutamyl-tRNA(Asn/Gln) amidotransferase subunit B.